Consider the following 120-residue polypeptide: Non-specific lipid-transfer protein 2 (120 aa).

Positions 1-25 (MATSMKLACVALVMCMVVIAPMAEA) are cleaved as a signal peptide. Disulfide bonds link C29-C78, C39-C55, C56-C101, and C76-C115.

The protein belongs to the plant LTP family. Expressed in roots, stem, leaves and tendrils of the mature plant.

Functionally, plant non-specific lipid-transfer proteins transfer phospholipids as well as galactolipids across membranes. May play a role in wax or cutin deposition in the cell walls of expanding epidermal cells and certain secretory tissues. The chain is Non-specific lipid-transfer protein 2 from Pisum sativum (Garden pea).